The following is a 603-amino-acid chain: ABC transporter E family member 1 (603 aa).

4Fe-4S ferredoxin-type domains follow at residues 7–39 and 46–75; these read RIAI…KLCI and KSAF…IINL. ABC transporter domains lie at 70–315 and 344–566; these read IQII…FLAG and VKSY…LSHL. Residues 110–117 and 381–388 contribute to the ATP site; these read GTNGIGKS and GENGTGKT.

The protein belongs to the ABC transporter superfamily. ABCE family. In terms of tissue distribution, expressed in roots, stems, leaves, flowers and siliques.

It is found in the membrane. In Arabidopsis thaliana (Mouse-ear cress), this protein is ABC transporter E family member 1 (ABCE1).